The sequence spans 360 residues: Pyrimidine monooxygenase RutA (360 aa).

Residues 49-50 (IK), N115, E124, 140-141 (RY), and S190 contribute to the FMN site.

It belongs to the NtaA/SnaA/DszA monooxygenase family. RutA subfamily.

The catalysed reaction is uracil + FMNH2 + NADH + O2 = (Z)-3-ureidoacrylate + FMN + NAD(+) + H2O + H(+). It carries out the reaction thymine + FMNH2 + NADH + O2 = (Z)-2-methylureidoacrylate + FMN + NAD(+) + H2O + H(+). Catalyzes the pyrimidine ring opening between N-3 and C-4 by an unusual flavin hydroperoxide-catalyzed mechanism, adding oxygen atoms in the process to yield ureidoacrylate peracid, that immediately reacts with FMN forming ureidoacrylate and FMN-N(5)-oxide. The FMN-N(5)-oxide reacts spontaneously with NADH to produce FMN. Requires the flavin reductase RutF to regenerate FMN in vivo. This Pseudomonas savastanoi pv. phaseolicola (strain 1448A / Race 6) (Pseudomonas syringae pv. phaseolicola (strain 1448A / Race 6)) protein is Pyrimidine monooxygenase RutA.